Consider the following 429-residue polypeptide: Lysine-specific demethylase JMJ30 (429 aa).

The 158-residue stretch at 272–429 (SSPMEPTYLA…WSNEAESSSS (158 aa)) folds into the JmjC domain. Fe cation contacts are provided by H326, D328, and H405.

Belongs to the JARID1 histone demethylase family. Interacts with EFM. Binds to ATXR2, ARF7 and ARF19. Requires Fe(2+) as cofactor. In terms of tissue distribution, expressed ubiquitously in vasculatures, roots, rosette leaves, stems, inflorescences and siliques. Mainly present in the root meristem and root differentiation area. Observed at high level in callus.

It localises to the nucleus. Its subcellular location is the cytoplasm. It is found in the endoplasmic reticulum. It catalyses the reaction N(6),N(6),N(6)-trimethyl-L-lysyl(36)-[histone H3] + 2 2-oxoglutarate + 2 O2 = N(6)-methyl-L-lysyl(36)-[histone H3] + 2 formaldehyde + 2 succinate + 2 CO2. It carries out the reaction N(6),N(6),N(6)-trimethyl-L-lysyl(27)-[histone H3] + 2 2-oxoglutarate + 2 O2 = N(6)-methyl-L-lysyl(27)-[histone H3] + 2 formaldehyde + 2 succinate + 2 CO2. The enzyme catalyses N(6),N(6)-dimethyl-L-lysyl(36)-[histone H3] + 2 2-oxoglutarate + 2 O2 = L-lysyl(36)-[histone H3] + 2 formaldehyde + 2 succinate + 2 CO2. Histone demethylase that demethylates 'Lys-36' (H3K36me) of histone H3 with a specific activity for H3K36me3 and H3K36me2. Also active on 'Lys-27' (H3K27me) of histone H3 with a specific activity for H3K27me3 and H3K27me2. No activity on H3K36me1 and H3K27me1. Involved in the control of flowering time by demethylating H3K36me2 at the FT locus and repressing its expression. Acts within the central clock and contributes, in parallel with LUX, to temperature compensation, probably as a component of the evening complex, to maintain circadian period at increasing temperatures; this mechanism involves binding to and regulation of CCA1 and PRR7 promoters. Works in concert with TOC1 to promote the morning-phased clock genes CCA1 and LHY which function as components of the central oscillator. Together with JMJ32, regulates the flowering-repressor FLOWERING LOCUS C (FLC) locus by removing the repressive histone modification H3 lysine 27 trimethylation (H3K27me3), especially at elevated temperatures (e.g. 29 degrees Celsius), thus preventing extreme precocious flowering. JMJ30 and JMJ32 are regulators involved in the integration of abscisic acid (ABA) and brassinosteroids (BR) signaling pathways. Together with JMJ32, controls ABA-mediated growth arrest during the post-germination stage in unfavorable conditions, and responses to ABA during root development, via the removal of repressive histone mark (H3K27me3) from the SnRK2.8 promoter, thus promoting SnRK2.8 expression and subsequent kinase-dependent ABI3 activation. In addition, removes the repressive histone marks (H3K27me3) from the BZR1 locus in response to stress and ABA, thus activating the BR signaling pathway which, in turn, inhibits the ABA signaling pathway. Able to drive tissue identity changes to promote callus formation form somatic cells via a massive genome-wide chromatin remodeling (e.g. H3K9me3 demethylation) leading to the induction of Lateral organ Boundaries-Domain (LBD) genes (e.g. LBD16 and LBD29) that establish root primordia; when in complex with ARF proteins (e.g. ARF7 and ARF19), recruits ATXR2 which promotes the deposition of H3K36me3 at LBD genes promoters, thus ensuring their stable activation during callus formation. The polypeptide is Lysine-specific demethylase JMJ30 (Arabidopsis thaliana (Mouse-ear cress)).